A 238-amino-acid polypeptide reads, in one-letter code: Ubiquinone biosynthesis O-methyltransferase (238 aa).

The S-adenosyl-L-methionine site is built by Arg-38, Gly-57, Asp-78, and Leu-124.

This sequence belongs to the methyltransferase superfamily. UbiG/COQ3 family.

The enzyme catalyses a 3-demethylubiquinol + S-adenosyl-L-methionine = a ubiquinol + S-adenosyl-L-homocysteine + H(+). It catalyses the reaction a 3-(all-trans-polyprenyl)benzene-1,2-diol + S-adenosyl-L-methionine = a 2-methoxy-6-(all-trans-polyprenyl)phenol + S-adenosyl-L-homocysteine + H(+). The protein operates within cofactor biosynthesis; ubiquinone biosynthesis. Its function is as follows. O-methyltransferase that catalyzes the 2 O-methylation steps in the ubiquinone biosynthetic pathway. The chain is Ubiquinone biosynthesis O-methyltransferase from Marinobacter nauticus (strain ATCC 700491 / DSM 11845 / VT8) (Marinobacter aquaeolei).